The primary structure comprises 1833 residues: Proteasome activator complex subunit 4A (1833 aa).

HEAT repeat units lie at residues 460–504 and 983–1022; these read PEGP…LVDC and NFCC…NHSG. A disordered region spans residues 1095–1122; it reads SSSPEPNPGAASEQEELEGRKREEQKNK. The span at 1111–1122 shows a compositional bias: basic and acidic residues; it reads LEGRKREEQKNK. HEAT repeat units follow at residues 1164–1202, 1344–1382, 1626–1664, and 1670–1708; these read LPLP…QLKR, DAFL…GSKH, SDQI…YNLF, and AKAV…CNFL. The tract at residues 1640-1728 is bromodomain-like (BRDL); that stretch reads SRSSSWHARY…ESLSKTRLPK (89 aa).

It belongs to the BLM10 family. Homodimer. Interacts with the 20S and 26S proteasomes.

The protein resides in the cytoplasm. It localises to the cytosol. It is found in the nucleus. The protein localises to the nucleus speckle. Its function is as follows. Associated component of the proteasome that specifically recognizes acetylated histones and promotes ATP- and ubiquitin-independent degradation of core histones during DNA damage response. Recognizes and binds acetylated histones via its bromodomain-like (BRDL) region and activates the proteasome by opening the gated channel for substrate entry. Binds to the core proteasome via its C-terminus, which occupies the same binding sites as the proteasomal ATPases, opening the closed structure of the proteasome via an active gating mechanism. involved in DNA damage response in somatic cells: binds to acetylated histones and promotes degradation of histones. The chain is Proteasome activator complex subunit 4A (psme4a) from Danio rerio (Zebrafish).